A 143-amino-acid polypeptide reads, in one-letter code: Large ribosomal subunit protein uL13 (143 aa).

It belongs to the universal ribosomal protein uL13 family. In terms of assembly, part of the 50S ribosomal subunit.

Its function is as follows. This protein is one of the early assembly proteins of the 50S ribosomal subunit, although it is not seen to bind rRNA by itself. It is important during the early stages of 50S assembly. This is Large ribosomal subunit protein uL13 from Carboxydothermus hydrogenoformans (strain ATCC BAA-161 / DSM 6008 / Z-2901).